Here is a 100-residue protein sequence, read N- to C-terminus: Integration host factor subunit alpha (100 aa).

The tract at residues 53 to 72 (FQLRDKPQRPGRNPKTGEEV) is disordered.

Belongs to the bacterial histone-like protein family. Heterodimer of an alpha and a beta chain.

This protein is one of the two subunits of integration host factor, a specific DNA-binding protein that functions in genetic recombination as well as in transcriptional and translational control. This is Integration host factor subunit alpha from Neisseria meningitidis serogroup C (strain 053442).